Consider the following 347-residue polypeptide: S-adenosylmethionine:tRNA ribosyltransferase-isomerase (347 aa).

Belongs to the QueA family. In terms of assembly, monomer.

Its subcellular location is the cytoplasm. The enzyme catalyses 7-aminomethyl-7-carbaguanosine(34) in tRNA + S-adenosyl-L-methionine = epoxyqueuosine(34) in tRNA + adenine + L-methionine + 2 H(+). The protein operates within tRNA modification; tRNA-queuosine biosynthesis. Its function is as follows. Transfers and isomerizes the ribose moiety from AdoMet to the 7-aminomethyl group of 7-deazaguanine (preQ1-tRNA) to give epoxyqueuosine (oQ-tRNA). The protein is S-adenosylmethionine:tRNA ribosyltransferase-isomerase of Bordetella bronchiseptica (strain ATCC BAA-588 / NCTC 13252 / RB50) (Alcaligenes bronchisepticus).